The following is a 307-amino-acid chain: Malate dehydrogenase (307 aa).

Residues 8–13 (GAGNVG) and D32 each bind NAD(+). 2 residues coordinate substrate: R81 and R87. Residues N94 and 117–119 (VSN) each bind NAD(+). The substrate site is built by N119 and R150. Residue H174 is the Proton acceptor of the active site.

The protein belongs to the LDH/MDH superfamily. MDH type 3 family.

It catalyses the reaction (S)-malate + NAD(+) = oxaloacetate + NADH + H(+). Catalyzes the reversible oxidation of malate to oxaloacetate. This chain is Malate dehydrogenase, found in Dehalococcoides mccartyi (strain CBDB1).